The primary structure comprises 477 residues: Beta-agarase D (477 aa).

The first 20 residues, 1-20 (MKRSILLAIIAFLQFFTSYG), serve as a signal peptide directing secretion. The 357-residue stretch at 22–378 (YDWDNVPIPA…WIRVYKPVNA (357 aa)) folds into the GH16 domain. Residues 94-104 (MQNHVAVSGGN), 123-125 (NNT), Glu-174, Glu-179, Arg-206, and Glu-340 contribute to the substrate site. The active-site Nucleophile is Glu-174. The Proton donor role is filled by Glu-179. Positions 382-391 (NSAETTSTVE) are enriched in low complexity. Positions 382 to 402 (NSAETTSTVEKPASFEPQGQP) are disordered.

Belongs to the glycosyl hydrolase 16 family.

Its subcellular location is the secreted. The enzyme catalyses Hydrolysis of (1-&gt;4)-beta-D-galactosidic linkages in agarose, giving the tetramer as the predominant product.. Functionally, cleaves the beta-1,4-linkages between beta-D-galactose and alpha-L-3,6-anhydro-galactose residues in agarose. Cleaves agarose in a random manner with retention of the anomeric-bond configuration, producing beta-anomers that give rise progressively to alpha-anomers when mutarotation takes place. Requires at least 4 consecutive agarose units and is highly intolerant to modifications. The sequence is that of Beta-agarase D (agaD) from Zobellia galactanivorans (strain DSM 12802 / CCUG 47099 / CIP 106680 / NCIMB 13871 / Dsij).